A 727-amino-acid polypeptide reads, in one-letter code: Elongation factor 2 (727 aa).

The region spanning 19–260 (DQIRNMGICA…MAITHLPNPL (242 aa)) is the tr-type G domain. GTP is bound by residues 28-35 (AHIDHGKT), 94-98 (DTPGH), and 148-151 (NKVD). Position 603 is a diphthamide (His-603).

The protein belongs to the TRAFAC class translation factor GTPase superfamily. Classic translation factor GTPase family. EF-G/EF-2 subfamily.

The protein localises to the cytoplasm. Functionally, catalyzes the GTP-dependent ribosomal translocation step during translation elongation. During this step, the ribosome changes from the pre-translocational (PRE) to the post-translocational (POST) state as the newly formed A-site-bound peptidyl-tRNA and P-site-bound deacylated tRNA move to the P and E sites, respectively. Catalyzes the coordinated movement of the two tRNA molecules, the mRNA and conformational changes in the ribosome. This Methanococcus maripaludis (strain C6 / ATCC BAA-1332) protein is Elongation factor 2.